The chain runs to 826 residues: E3 ubiquitin ligase PARAQUAT TOLERANCE 3 (826 aa).

The region spanning 3–76 is the DWNN domain; it reads IYYKFKSARD…NTSVLIRRVP (74 aa). The CCHC-type zinc-finger motif lies at 203–216; the sequence is CHRCNVSGHFIQHC. S278 bears the Phosphoserine mark. Residues 288–326 form an RING-type; degenerate zinc finger; that stretch reads CPLCKEVMRDAALASKCCLKSYCDKCIRDHIIAKSMCVC. Composition is skewed to polar residues over residues 356-365, 396-406, and 435-454; these read SAENAGSMCQ, PSNNNETSTLK, and NIQG…NTQP. Disordered regions lie at residues 356–406, 435–488, and 585–826; these read SAEN…STLK, NIQG…GPDY, and HPIM…RARA. S397 is modified (phosphoserine). Over residues 588–624 the composition is skewed to basic and acidic residues; it reads MGREEFEAKKTEMKRKRENEIRRSEGGNVVRDSEKSR. Positions 625-635 are enriched in polar residues; that stretch reads IMNNSAVTSSP. The segment covering 651–667 has biased composition (basic and acidic residues); that stretch reads DYDRRRRSDRSSPERQS. 2 short sequence motifs (nuclear localization signal) span residues 668-675 and 695-702; these read SRRFTSPP and DRRRDRPR. Basic and acidic residues predominate over residues 680–706; that stretch reads RKSERDRHHDLDSEHDRRRDRPRETDR. The span at 790–799 shows a compositional bias: basic residues; that stretch reads FKRKPSRYKR. The residue at position 800 (S800) is a Phosphoserine. The span at 809 to 826 shows a compositional bias: basic and acidic residues; the sequence is GDEHFRHSKRSKGERARA.

As to quaternary structure, interacts with PRMT13/PRMT4B in the nucleus. Expressed constitutively in both shoot and root tissues.

The protein resides in the nucleus. The catalysed reaction is S-ubiquitinyl-[E2 ubiquitin-conjugating enzyme]-L-cysteine + [acceptor protein]-L-lysine = [E2 ubiquitin-conjugating enzyme]-L-cysteine + N(6)-ubiquitinyl-[acceptor protein]-L-lysine.. E3 ubiquitin ligase acting as a negative regulator of oxidative stress tolerance, probably by mediating 26S proteasome-mediated degradation of PRMT13/PRMT4B, thus preventing APX1 and GPX1 accumulation via the reduction of histone H3 methylation (H3R17me2a). Confers sensitivity to cadmium CdCl(2) and salt NaCl stresses. In Arabidopsis thaliana (Mouse-ear cress), this protein is E3 ubiquitin ligase PARAQUAT TOLERANCE 3.